Consider the following 269-residue polypeptide: Major capsid protein P2 (269 aa).

As to quaternary structure, homotrimer.

It is found in the virion. In terms of biological role, major capsid protein. This Pseudoalteromonas phage PM2 (Bacteriophage PM2) protein is Major capsid protein P2 (II).